Reading from the N-terminus, the 225-residue chain is MKEVKDFYDKWEPEDFPNYIKLLMNFADELIFEEISLLLKKFENKKDFLVLDCGCGFGAFYNLTKDFNTIYLDISLNLLKRFKLKERKICANILHLPFKDNTFDLVLCINVLEHVNYLKALNEIRRILKNKGKLIVVVVNKDSLIKEEIFNDFKIFHKPLSIKDFEIDGFKIVYSNSVYFLPSIFKISPPIILSKIIEYWKPVDKKLSKIFKNKGQFLIIEMVKE.

This is an uncharacterized protein from Methanocaldococcus jannaschii (strain ATCC 43067 / DSM 2661 / JAL-1 / JCM 10045 / NBRC 100440) (Methanococcus jannaschii).